The sequence spans 400 residues: Protection of telomeres homolog 1 (400 aa).

The protein belongs to the telombin family. In terms of tissue distribution, expressed in sperm and oocytes.

It localises to the nucleus. Its subcellular location is the nucleus envelope. The protein resides in the chromosome. It is found in the telomere. Its function is as follows. Telomeric DNA-binding protein, which binds to single-stranded C-rich repeat sequences, with high specificity to the 5'-GCCTAA-3' sequence. Repeat sequence binding can be at the 5' or 3' telomeric end. May have a role in protecting the 5' end of the C-rich strand of the telomere. Acts redundantly with pot-2 to negatively regulate telomerase-mediated telomere extension. Also regulates telomere length by the telomerase-independent telomere maintenance pathway called ALT (alternative lengthening of telomeres). Through sun-1, anchors telomeres to the nuclear envelope in embryos. The protein is Protection of telomeres homolog 1 of Caenorhabditis elegans.